A 953-amino-acid chain; its full sequence is Kinesin-like protein KIF23 (953 aa).

The Nuclear localization signal motif lies at 7–11 (KTVRK). The Kinesin motor domain maps to 25–436 (PVGVYCRVRP…MRFAEVTQEV (412 aa)). 112–119 (GVTGSGKT) serves as a coordination point for ATP. A phosphoserine mark is found at Ser-155 and Ser-160. Residues 542–618 (QEKLNEREKV…RRLEARLQGM (77 aa)) are a coiled coil. Glycyl lysine isopeptide (Lys-Gly) (interchain with G-Cter in SUMO2) cross-links involve residues Lys-572 and Lys-587. Residue Ser-606 is modified to Phosphoserine. Residues Lys-625, Lys-648, Lys-663, and Lys-666 each participate in a glycyl lysine isopeptide (Lys-Gly) (interchain with G-Cter in SUMO2) cross-link. The segment at 658 to 695 (IVTEPKPEKPERPSRERDREKIIPRSVSPSPLPLSSNN) is disordered. Residues 662–680 (PKPEKPERPSRERDREKII) show a composition bias toward basic and acidic residues. Residues 681–693 (PRSVSPSPLPLSS) are compositionally biased toward low complexity. Phosphoserine occurs at positions 683 and 685. Phosphothreonine is present on Thr-739. Ser-807 carries the post-translational modification Phosphoserine. Glycyl lysine isopeptide (Lys-Gly) (interchain with G-Cter in SUMO2) cross-links involve residues Lys-816 and Lys-847. Residue Ser-860 is modified to Phosphoserine. Residues Lys-867, Lys-870, and Lys-892 each participate in a glycyl lysine isopeptide (Lys-Gly) (interchain with G-Cter in SUMO2) cross-link. 2 disordered regions span residues 894-921 (ELPTGSRKRRSSTLAPAQPDGTESEWTD) and 934-953 (AGSQLGPGYQHHAQPKRKKP). Position 904 is a phosphoserine (Ser-904). Thr-920 carries the post-translational modification Phosphothreonine. Residue Lys-949 forms a Glycyl lysine isopeptide (Lys-Gly) (interchain with G-Cter in SUMO2) linkage.

It belongs to the TRAFAC class myosin-kinesin ATPase superfamily. Kinesin family. As to quaternary structure, heterotetramer of two molecules each of RACGAP1 and KIF23. Found in the centralspindlin complex. Interacts with RACGAP1; the interaction is direct. Interacts with ECT2 and PRC1. Interacts with ANXA11 during cytokinesis. Interacts with BIRC6/bruce and USP8/UBPY. Interacts with ARF6, forming heterodimers and heterotetramers. Ubiquitinated. Deubiquitinated by USP8/UBPY. As to expression, detected in testis and ovary from newborn mice (at protein level). Detected in brain, spinal cord and small intestine.

Its subcellular location is the nucleus. It is found in the cytoplasm. It localises to the cytoskeleton. The protein resides in the spindle. The protein localises to the midbody. Its subcellular location is the midbody ring. Functionally, component of the centralspindlin complex that serves as a microtubule-dependent and Rho-mediated signaling required for the myosin contractile ring formation during the cell cycle cytokinesis. Essential for cytokinesis in Rho-mediated signaling. Required for the localization of ECT2 to the central spindle. Plus-end-directed motor enzyme that moves antiparallel microtubules in vitro. This is Kinesin-like protein KIF23 (Kif23) from Mus musculus (Mouse).